The primary structure comprises 387 residues: UDP-N-acetylglucosamine--N-acetylmuramyl-(pentapeptide) pyrophosphoryl-undecaprenol N-acetylglucosamine transferase (387 aa).

UDP-N-acetyl-alpha-D-glucosamine is bound by residues 23 to 25 (TGG), N135, R174, S203, I261, 280 to 285 (ALTVSE), and Q306.

It belongs to the glycosyltransferase 28 family. MurG subfamily.

The protein resides in the cell inner membrane. It catalyses the reaction di-trans,octa-cis-undecaprenyl diphospho-N-acetyl-alpha-D-muramoyl-L-alanyl-D-glutamyl-meso-2,6-diaminopimeloyl-D-alanyl-D-alanine + UDP-N-acetyl-alpha-D-glucosamine = di-trans,octa-cis-undecaprenyl diphospho-[N-acetyl-alpha-D-glucosaminyl-(1-&gt;4)]-N-acetyl-alpha-D-muramoyl-L-alanyl-D-glutamyl-meso-2,6-diaminopimeloyl-D-alanyl-D-alanine + UDP + H(+). Its pathway is cell wall biogenesis; peptidoglycan biosynthesis. Its function is as follows. Cell wall formation. Catalyzes the transfer of a GlcNAc subunit on undecaprenyl-pyrophosphoryl-MurNAc-pentapeptide (lipid intermediate I) to form undecaprenyl-pyrophosphoryl-MurNAc-(pentapeptide)GlcNAc (lipid intermediate II). The chain is UDP-N-acetylglucosamine--N-acetylmuramyl-(pentapeptide) pyrophosphoryl-undecaprenol N-acetylglucosamine transferase from Colwellia psychrerythraea (strain 34H / ATCC BAA-681) (Vibrio psychroerythus).